The sequence spans 85 residues: Large ribosomal subunit protein uL23 (85 aa).

Belongs to the universal ribosomal protein uL23 family. In terms of assembly, part of the 50S ribosomal subunit. Interacts with protein L29 and weakly with protein L39e.

Its function is as follows. Binds to a specific region on the 23S rRNA. Located at the polypeptide exit tunnel on the outside of the subunit. The sequence is that of Large ribosomal subunit protein uL23 from Haloarcula marismortui (strain ATCC 43049 / DSM 3752 / JCM 8966 / VKM B-1809) (Halobacterium marismortui).